The primary structure comprises 53 residues: MCSYYHMKKRSVSGCNITIFAVMFSHLSAGKSPCGNQANVLCISRLEFVQYQS.

The N-terminal stretch at 1–30 (MCSYYHMKKRSVSGCNITIFAVMFSHLSAG) is a signal peptide.

The protein resides in the secreted. Functionally, enhances IgA secretion from B-cells stimulated via CD40. In Homo sapiens (Human), this protein is IgA-inducing protein homolog (IGIP).